The following is a 549-amino-acid chain: Cation/acetate symporter ActP (549 aa).

Helical transmembrane passes span 32-54 (IQAI…WASK), 75-97 (GMAI…LVYT), 102-124 (GLIY…AERL), 145-167 (IRIL…QMVG), 182-204 (VAVV…LATT), 211-233 (AILL…NFNF), 263-285 (ALSL…MRFF), 298-320 (FYAT…GAIL), 361-383 (AVAF…SAVS), 404-423 (VSKI…GILF), 428-450 (IAFM…ILLS), 462-484 (LVGG…TIWV), and 494-516 (YPYE…LFSI).

The protein belongs to the sodium:solute symporter (SSF) (TC 2.A.21) family.

The protein localises to the cell inner membrane. Transports acetate. The protein is Cation/acetate symporter ActP of Photorhabdus laumondii subsp. laumondii (strain DSM 15139 / CIP 105565 / TT01) (Photorhabdus luminescens subsp. laumondii).